The chain runs to 213 residues: Na(+)-translocating NADH-quinone reductase subunit D (213 aa).

A run of 7 helical transmembrane segments spans residues 21–41, 42–62, 77–97, 101–121, 131–151, 153–173, and 183–203; these read ILIAILGICSALAVTTTVQTA, ITMGIAVSIVTGCSSFFVSLL, IIISLFVIVIDQFLKAFFFDI, LSVFVGLIITNCIVMGRSESL, FLDGFASGLGYGWVLLVIGVI, ELFGFGTLMGFRIIPQFVYAS, and LSLMVLAPSAFFLLGIMIWLV.

The protein belongs to the NqrDE/RnfAE family. In terms of assembly, composed of six subunits; NqrA, NqrB, NqrC, NqrD, NqrE and NqrF.

The protein resides in the cell inner membrane. It catalyses the reaction a ubiquinone + n Na(+)(in) + NADH + H(+) = a ubiquinol + n Na(+)(out) + NAD(+). In terms of biological role, NQR complex catalyzes the reduction of ubiquinone-1 to ubiquinol by two successive reactions, coupled with the transport of Na(+) ions from the cytoplasm to the periplasm. NqrA to NqrE are probably involved in the second step, the conversion of ubisemiquinone to ubiquinol. The polypeptide is Na(+)-translocating NADH-quinone reductase subunit D (Chlamydia pneumoniae (Chlamydophila pneumoniae)).